Consider the following 201-residue polypeptide: Thymidylate kinase (201 aa).

7 to 14 (GGEGSGKT) lines the ATP pocket.

This sequence belongs to the thymidylate kinase family.

The enzyme catalyses dTMP + ATP = dTDP + ADP. Functionally, phosphorylation of dTMP to form dTDP in both de novo and salvage pathways of dTTP synthesis. This chain is Thymidylate kinase, found in Acholeplasma laidlawii (strain PG-8A).